The sequence spans 682 residues: Probable potassium transport system protein Kup (682 aa).

Helical transmembrane passes span 13–33, 55–75, 98–118, 138–158, 171–191, 217–237, 250–270, 295–315, 344–364, 375–395, 405–425, and 428–448; these read GLLV…LYVM, ISLI…LIAL, WLVI…TLTP, IPVP…LFLF, TFGP…IMNL, VGVL…ALYS, SWPY…VWIL, FFAI…LITG, LFIP…VFLF, GLAI…YLSL, VFLL…LAKF, and GGYV…IWYF.

Belongs to the HAK/KUP transporter (TC 2.A.72) family.

Its subcellular location is the cell membrane. The catalysed reaction is K(+)(in) + H(+)(in) = K(+)(out) + H(+)(out). In terms of biological role, transport of potassium into the cell. Likely operates as a K(+):H(+) symporter. This is Probable potassium transport system protein Kup from Lactobacillus gasseri (strain ATCC 33323 / DSM 20243 / BCRC 14619 / CIP 102991 / JCM 1131 / KCTC 3163 / NCIMB 11718 / NCTC 13722 / AM63).